The following is a 152-amino-acid chain: Methylglyoxal synthase (152 aa).

Positions 6-152 constitute an MGS-like domain; it reads RTLATEKNIA…YEGYLKERLK (147 aa). Substrate-binding positions include His-19, Lys-23, 45–48, and 65–66; these read TGTT and SG. The Proton donor/acceptor role is filled by Asp-71. His-98 lines the substrate pocket.

This sequence belongs to the methylglyoxal synthase family.

It carries out the reaction dihydroxyacetone phosphate = methylglyoxal + phosphate. Catalyzes the formation of methylglyoxal from dihydroxyacetone phosphate. This Proteus mirabilis (strain HI4320) protein is Methylglyoxal synthase.